Here is a 455-residue protein sequence, read N- to C-terminus: Pup--protein ligase (455 aa).

Glu12 contributes to the Mg(2+) binding site. Residue Arg56 participates in ATP binding. Tyr58 provides a ligand contact to Mg(2+). Asp60 functions as the Proton acceptor in the catalytic mechanism. Glu66 is a binding site for Mg(2+). 2 residues coordinate ATP: Thr69 and Trp422.

The protein belongs to the Pup ligase/Pup deamidase family. Pup-conjugating enzyme subfamily.

It catalyses the reaction ATP + [prokaryotic ubiquitin-like protein]-L-glutamate + [protein]-L-lysine = ADP + phosphate + N(6)-([prokaryotic ubiquitin-like protein]-gamma-L-glutamyl)-[protein]-L-lysine.. The protein operates within protein degradation; proteasomal Pup-dependent pathway. It functions in the pathway protein modification; protein pupylation. In terms of biological role, catalyzes the covalent attachment of the prokaryotic ubiquitin-like protein modifier Pup to the proteasomal substrate proteins, thereby targeting them for proteasomal degradation. This tagging system is termed pupylation. The ligation reaction involves the side-chain carboxylate of the C-terminal glutamate of Pup and the side-chain amino group of a substrate lysine. The chain is Pup--protein ligase from Acidimicrobium ferrooxidans (strain DSM 10331 / JCM 15462 / NBRC 103882 / ICP).